A 155-amino-acid polypeptide reads, in one-letter code: Ribosomal RNA large subunit methyltransferase H (155 aa).

Residues leucine 72, glycine 103, and 122 to 127 (LSALTL) contribute to the S-adenosyl-L-methionine site.

It belongs to the RNA methyltransferase RlmH family. As to quaternary structure, homodimer.

The protein resides in the cytoplasm. It carries out the reaction pseudouridine(1915) in 23S rRNA + S-adenosyl-L-methionine = N(3)-methylpseudouridine(1915) in 23S rRNA + S-adenosyl-L-homocysteine + H(+). In terms of biological role, specifically methylates the pseudouridine at position 1915 (m3Psi1915) in 23S rRNA. The chain is Ribosomal RNA large subunit methyltransferase H from Enterobacter sp. (strain 638).